We begin with the raw amino-acid sequence, 402 residues long: Probable tRNA pseudouridine synthase D (402 aa).

Asp94 (nucleophile) is an active-site residue. The 190-residue stretch at 175–364 (YILNYYGTQR…PGTRRKLITK (190 aa)) folds into the TRUD domain.

Belongs to the pseudouridine synthase TruD family.

The enzyme catalyses uridine(13) in tRNA = pseudouridine(13) in tRNA. In terms of biological role, could be responsible for synthesis of pseudouridine from uracil-13 in transfer RNAs. The sequence is that of Probable tRNA pseudouridine synthase D from Methanococcus aeolicus (strain ATCC BAA-1280 / DSM 17508 / OCM 812 / Nankai-3).